The chain runs to 455 residues: Bifunctional protein GlmU (455 aa).

The interval 1 to 226 (MIAVAILAAG…YQEILGINDR (226 aa)) is pyrophosphorylase. UDP-N-acetyl-alpha-D-glucosamine-binding positions include 7–10 (LAAG), lysine 21, glutamine 73, and 78–79 (GT). Aspartate 103 contacts Mg(2+). UDP-N-acetyl-alpha-D-glucosamine-binding residues include glycine 140, glutamate 155, asparagine 170, and asparagine 224. Asparagine 224 provides a ligand contact to Mg(2+). The linker stretch occupies residues 227-247 (KQLATAYKILQDRIKDDWLVA). Residues 248-455 (GVTIMDPDSI…RPISSKQTEK (208 aa)) are N-acetyltransferase. 2 residues coordinate UDP-N-acetyl-alpha-D-glucosamine: arginine 329 and lysine 347. Residue histidine 359 is the Proton acceptor of the active site. 2 residues coordinate UDP-N-acetyl-alpha-D-glucosamine: tyrosine 362 and asparagine 373. Acetyl-CoA is bound by residues alanine 376, 382 to 383 (NY), alanine 419, and arginine 436.

In the N-terminal section; belongs to the N-acetylglucosamine-1-phosphate uridyltransferase family. It in the C-terminal section; belongs to the transferase hexapeptide repeat family. As to quaternary structure, homotrimer. It depends on Mg(2+) as a cofactor.

The protein resides in the cytoplasm. The catalysed reaction is alpha-D-glucosamine 1-phosphate + acetyl-CoA = N-acetyl-alpha-D-glucosamine 1-phosphate + CoA + H(+). It carries out the reaction N-acetyl-alpha-D-glucosamine 1-phosphate + UTP + H(+) = UDP-N-acetyl-alpha-D-glucosamine + diphosphate. The protein operates within nucleotide-sugar biosynthesis; UDP-N-acetyl-alpha-D-glucosamine biosynthesis; N-acetyl-alpha-D-glucosamine 1-phosphate from alpha-D-glucosamine 6-phosphate (route II): step 2/2. It functions in the pathway nucleotide-sugar biosynthesis; UDP-N-acetyl-alpha-D-glucosamine biosynthesis; UDP-N-acetyl-alpha-D-glucosamine from N-acetyl-alpha-D-glucosamine 1-phosphate: step 1/1. It participates in bacterial outer membrane biogenesis; LPS lipid A biosynthesis. Functionally, catalyzes the last two sequential reactions in the de novo biosynthetic pathway for UDP-N-acetylglucosamine (UDP-GlcNAc). The C-terminal domain catalyzes the transfer of acetyl group from acetyl coenzyme A to glucosamine-1-phosphate (GlcN-1-P) to produce N-acetylglucosamine-1-phosphate (GlcNAc-1-P), which is converted into UDP-GlcNAc by the transfer of uridine 5-monophosphate (from uridine 5-triphosphate), a reaction catalyzed by the N-terminal domain. The sequence is that of Bifunctional protein GlmU from Acaryochloris marina (strain MBIC 11017).